We begin with the raw amino-acid sequence, 318 residues long: NADH-ubiquinone oxidoreductase chain 1 (318 aa).

The next 9 membrane-spanning stretches (helical) occupy residues 2 to 22 (FLTN…FLTL), 36 to 56 (GPNI…IKLF), 69 to 89 (LLFT…WIPL), 100 to 120 (LGML…LWSG), 130 to 152 (IGAL…ILLH), 171 to 191 (HIWL…STLA), 217 to 237 (AGPF…MNAL), 254 to 273 (LYST…FLWI), and 294 to 314 (LPLT…LTSI).

It belongs to the complex I subunit 1 family.

Its subcellular location is the mitochondrion inner membrane. The catalysed reaction is a ubiquinone + NADH + 5 H(+)(in) = a ubiquinol + NAD(+) + 4 H(+)(out). Functionally, core subunit of the mitochondrial membrane respiratory chain NADH dehydrogenase (Complex I) that is believed to belong to the minimal assembly required for catalysis. Complex I functions in the transfer of electrons from NADH to the respiratory chain. The immediate electron acceptor for the enzyme is believed to be ubiquinone. This Cyclopes didactylus (Silky anteater) protein is NADH-ubiquinone oxidoreductase chain 1 (MT-ND1).